Here is a 224-residue protein sequence, read N- to C-terminus: Lipoprotein-releasing system ATP-binding protein LolD (224 aa).

Positions 5–224 constitute an ABC transporter domain; the sequence is LRAENIKKVI…GKVVGEITRV (220 aa). Residue 37–44 coordinates ATP; sequence GASGSGKS.

It belongs to the ABC transporter superfamily. Lipoprotein translocase (TC 3.A.1.125) family. In terms of assembly, the complex is composed of two ATP-binding proteins (LolD) and two transmembrane proteins (LolC and LolE).

It is found in the cell inner membrane. In terms of biological role, part of the ABC transporter complex LolCDE involved in the translocation of mature outer membrane-directed lipoproteins, from the inner membrane to the periplasmic chaperone, LolA. Responsible for the formation of the LolA-lipoprotein complex in an ATP-dependent manner. The polypeptide is Lipoprotein-releasing system ATP-binding protein LolD (Aquifex aeolicus (strain VF5)).